The sequence spans 564 residues: Formate--tetrahydrofolate ligase (564 aa).

69-76 contacts ATP; the sequence is TPAGEGKS.

It belongs to the formate--tetrahydrofolate ligase family.

The catalysed reaction is (6S)-5,6,7,8-tetrahydrofolate + formate + ATP = (6R)-10-formyltetrahydrofolate + ADP + phosphate. The protein operates within one-carbon metabolism; tetrahydrofolate interconversion. The chain is Formate--tetrahydrofolate ligase from Renibacterium salmoninarum (strain ATCC 33209 / DSM 20767 / JCM 11484 / NBRC 15589 / NCIMB 2235).